The primary structure comprises 79 residues: PEQTAPYGLGNPPRRRRRSLPRRCQCSSARDPSCATFCLRRPWTEARAVPSRKSPADVFQTGKTGATRGELLQRLRDIS.

Positions proline 1–arginine 23 are disordered. Residues cysteine 24–leucine 39 form an endothelin-like region. Residues serine 51–serine 79 form a disordered region.

It belongs to the endothelin/sarafotoxin family.

The protein localises to the secreted. In terms of biological role, endothelins are endothelium-derived vasoconstrictor peptides. In Macaca fascicularis (Crab-eating macaque), this protein is Endothelin-2 (EDN2).